We begin with the raw amino-acid sequence, 534 residues long: Prolyl 4-hydroxylase subunit alpha-1 (534 aa).

The signal sequence occupies residues methionine 1–alanine 17. Residue asparagine 113 is glycosylated (N-linked (GlcNAc...) asparagine). The stretch at valine 205–histidine 238 is one TPR repeat. Asparagine 259 carries an N-linked (GlcNAc...) asparagine glycan. The region spanning threonine 411–glutamate 519 is the Fe2OG dioxygenase domain. Residues histidine 429, aspartate 431, and histidine 500 each contribute to the Fe cation site. A 2-oxoglutarate-binding site is contributed by lysine 510.

It belongs to the P4HA family. Heterotetramer of two alpha-1 chains and two beta chains (P4HB)(the beta chain is the multi-functional PDI), where P4HB plays the role of a structural subunit; this tetramer catalyzes the formation of 4-hydroxyproline in collagen. Fe(2+) serves as cofactor. Requires L-ascorbate as cofactor. In terms of tissue distribution, expressed in the heart, liver, skeletal muscle, kidney, placenta, lung and pancreas.

It localises to the endoplasmic reticulum lumen. The enzyme catalyses L-prolyl-[collagen] + 2-oxoglutarate + O2 = trans-4-hydroxy-L-prolyl-[collagen] + succinate + CO2. Inhibited by poly(L-proline). Its function is as follows. Catalyzes the post-translational formation of 4-hydroxyproline in -Xaa-Pro-Gly- sequences in collagens and other proteins. The protein is Prolyl 4-hydroxylase subunit alpha-1 (P4HA1) of Homo sapiens (Human).